Here is a 368-residue protein sequence, read N- to C-terminus: CST complex subunit STN1 (368 aa).

The tract at residues 1–185 (MQPGSSRCEE…KVYDQPFHSS (185 aa)) is interaction with CTC1. A DNA-binding region (OB) is located at residues 57–155 (VDVLGTVIGV…EIHATTYYKV (99 aa)). Winged helix-turn-helix (wHTH) stretches follow at residues 191–295 (EALS…YVTR) and 296–368 (EDKD…YTAF).

It belongs to the STN1 family. In terms of assembly, component of the CST complex, composed of TEN1/C17orf106, CTC1/C17orf68 and STN1; in the complex interacts directly with TEN1 and CTC1. Interacts with ACD/TPP1, POT1 and POLA1.

It is found in the nucleus. The protein resides in the chromosome. The protein localises to the telomere. Component of the CST complex proposed to act as a specialized replication factor promoting DNA replication under conditions of replication stress or natural replication barriers such as the telomere duplex. The CST complex binds single-stranded DNA with high affinity in a sequence-independent manner, while isolated subunits bind DNA with low affinity by themselves. Initially the CST complex has been proposed to protect telomeres from DNA degradation. However, the CST complex has been shown to be involved in several aspects of telomere replication. The CST complex inhibits telomerase and is involved in telomere length homeostasis; it is proposed to bind to newly telomerase-synthesized 3' overhangs and to terminate telomerase action implicating the association with the ACD:POT1 complex thus interfering with its telomerase stimulation activity. The CST complex is also proposed to be involved in fill-in synthesis of the telomeric C-strand probably implicating recruitment and activation of DNA polymerase alpha. The CST complex facilitates recovery from many forms of exogenous DNA damage; seems to be involved in the re-initiation of DNA replication at repaired forks and/or dormant origins. Required for efficicient replication of the duplex region of the telomere. Promotes efficient replication of lagging-strand telomeres. Promotes general replication start following replication-fork stalling implicating new origin firing. May be in involved in C-strand fill-in during late S/G2 phase independent of its role in telomere duplex replication. Its function is as follows. Component of the CST complex, a complex that binds to single-stranded DNA and is required to protect telomeres from DNA degradation. The CST complex binds single-stranded DNA with high affinity in a sequence-independent manner, while isolated subunits bind DNA with low affinity by themselves. In addition to telomere protection, the CST complex has probably a more general role in DNA metabolism at non-telomeric sites. The chain is CST complex subunit STN1 from Homo sapiens (Human).